The following is a 765-amino-acid chain: Ankyrin repeat and protein kinase domain-containing protein 1 (765 aa).

A Protein kinase domain is found at 22–289 (EGDWRLVASG…DITIETDILL (268 aa)). ATP contacts are provided by residues 28 to 36 (VASGGFSQV) and Lys51. The active-site Proton acceptor is Asp145. ANK repeat units lie at residues 361–390 (NKVT…DVDC), 394–423 (SGYT…DANR), 427–456 (DGWA…CVDA), 460–489 (EGWT…DPNL), 493–522 (EGKT…ELDA), 526–555 (NLRT…VPDA), 559–588 (SGYG…SLEL), 592–621 (QGWT…NMGA), 625–654 (VNWT…DPNA), 658–687 (SGWT…NVHA), 691–720 (VGWT…QLDV), and 724–753 (VSCT…SVAT).

The protein belongs to the protein kinase superfamily. TKL Ser/Thr protein kinase family. In terms of tissue distribution, highly expressed in brain and weakly expressed in placenta and spinal cord.

The enzyme catalyses L-seryl-[protein] + ATP = O-phospho-L-seryl-[protein] + ADP + H(+). The catalysed reaction is L-threonyl-[protein] + ATP = O-phospho-L-threonyl-[protein] + ADP + H(+). In Homo sapiens (Human), this protein is Ankyrin repeat and protein kinase domain-containing protein 1 (ANKK1).